The following is a 261-amino-acid chain: Cytochrome c oxidase subunit 3 (261 aa).

Residues 1 to 15 (MAHQSHAYHMVKPSP) lie on the Mitochondrial matrix side of the membrane. A helical transmembrane segment spans residues 16-34 (WPLTGALSALLTTSGLTMW). At 35–40 (FHFHST) the chain is on the mitochondrial intermembrane side. A helical membrane pass occupies residues 41 to 66 (TLLLTGLLTNALTMYQWWRDVVREST). The Mitochondrial matrix portion of the chain corresponds to 67-72 (YQGHHT). A helical membrane pass occupies residues 73-105 (LPVQKGLRYGMILFITSEVFFFAGFFWAFYHSS). Residues 106 to 128 (LAPTPQLGGHWPPTGIIPLNPLE) lie on the Mitochondrial intermembrane side of the membrane. Residues 129–152 (VPLLNTSVLLASGVSITWAHHSLM) form a helical membrane-spanning segment. At 153 to 155 (ENN) the chain is on the mitochondrial matrix side. Residues 156–183 (RTQMIQALLITILLGIYFTLLQASEYIE) form a helical membrane-spanning segment. The Mitochondrial intermembrane segment spans residues 184-190 (APFTISD). The chain crosses the membrane as a helical span at residues 191-223 (GIYGSTFFMATGFHGLHVIIGSTFLTVCLARQL). The Mitochondrial matrix segment spans residues 224–232 (LFHFTSKHH). The chain crosses the membrane as a helical span at residues 233 to 256 (FGFEAAAWYWHFVDVVWLFLYVSI). Over 257-261 (YWWGS) the chain is Mitochondrial intermembrane.

Belongs to the cytochrome c oxidase subunit 3 family. In terms of assembly, component of the cytochrome c oxidase (complex IV, CIV), a multisubunit enzyme composed of 14 subunits. The complex is composed of a catalytic core of 3 subunits MT-CO1, MT-CO2 and MT-CO3, encoded in the mitochondrial DNA, and 11 supernumerary subunits COX4I, COX5A, COX5B, COX6A, COX6B, COX6C, COX7A, COX7B, COX7C, COX8 and NDUFA4, which are encoded in the nuclear genome. The complex exists as a monomer or a dimer and forms supercomplexes (SCs) in the inner mitochondrial membrane with NADH-ubiquinone oxidoreductase (complex I, CI) and ubiquinol-cytochrome c oxidoreductase (cytochrome b-c1 complex, complex III, CIII), resulting in different assemblies (supercomplex SCI(1)III(2)IV(1) and megacomplex MCI(2)III(2)IV(2)).

Its subcellular location is the mitochondrion inner membrane. It catalyses the reaction 4 Fe(II)-[cytochrome c] + O2 + 8 H(+)(in) = 4 Fe(III)-[cytochrome c] + 2 H2O + 4 H(+)(out). Component of the cytochrome c oxidase, the last enzyme in the mitochondrial electron transport chain which drives oxidative phosphorylation. The respiratory chain contains 3 multisubunit complexes succinate dehydrogenase (complex II, CII), ubiquinol-cytochrome c oxidoreductase (cytochrome b-c1 complex, complex III, CIII) and cytochrome c oxidase (complex IV, CIV), that cooperate to transfer electrons derived from NADH and succinate to molecular oxygen, creating an electrochemical gradient over the inner membrane that drives transmembrane transport and the ATP synthase. Cytochrome c oxidase is the component of the respiratory chain that catalyzes the reduction of oxygen to water. Electrons originating from reduced cytochrome c in the intermembrane space (IMS) are transferred via the dinuclear copper A center (CU(A)) of subunit 2 and heme A of subunit 1 to the active site in subunit 1, a binuclear center (BNC) formed by heme A3 and copper B (CU(B)). The BNC reduces molecular oxygen to 2 water molecules using 4 electrons from cytochrome c in the IMS and 4 protons from the mitochondrial matrix. The polypeptide is Cytochrome c oxidase subunit 3 (MT-CO3) (Pongo abelii (Sumatran orangutan)).